The chain runs to 196 residues: Imidazoleglycerol-phosphate dehydratase (196 aa).

Belongs to the imidazoleglycerol-phosphate dehydratase family.

It localises to the cytoplasm. It carries out the reaction D-erythro-1-(imidazol-4-yl)glycerol 3-phosphate = 3-(imidazol-4-yl)-2-oxopropyl phosphate + H2O. It participates in amino-acid biosynthesis; L-histidine biosynthesis; L-histidine from 5-phospho-alpha-D-ribose 1-diphosphate: step 6/9. In Phenylobacterium zucineum (strain HLK1), this protein is Imidazoleglycerol-phosphate dehydratase.